Reading from the N-terminus, the 191-residue chain is Protein RER1A (191 aa).

Position 1 is an N-acetylmethionine (Met-1). Helical transmembrane passes span 39-57, 60-80, 115-135, and 136-156; these read YRWIGTLVVALIYCLRVYY, GFYIIAYGLGIYLLNLLIGFL, FKFWYSMTKAFCIAFLMTFFS, and VFDVPVFWPILLCYWIVLFVL.

The protein belongs to the RER1 family.

Its subcellular location is the membrane. In terms of biological role, involved in the retrieval of endoplasmic reticulum membrane proteins from the early Golgi compartment. This is Protein RER1A (RER1A) from Arabidopsis thaliana (Mouse-ear cress).